Consider the following 477-residue polypeptide: MKVTLPEFERAGVLVVGDVMLDRYWYGPTSRISPEAPVPVVKVENIEERPGGAANVAMNIASLGATSRLVGLTGIDDAARALSQALANVNVKCDFVSVPTHPTITKLRVLSRNQQLIRLDFEEGFSGVDPQPMHERIQQALGSIGALVLSDYAKGALTSVQTMIRLAREAGVPVLIDPKGTDFERYRGATLLTPNLSEFEAVVGKCQDEAQIVERGMKLIAEFELSALLVTRSEQGMTLLQPGRPPLHMPTQAQEVYDVTGAGDTVIGVLAATLASGNTLEEACYFANAAAGVVVGKLGTSTVSPVELENAVRGRAETGFGVMSEEELKQAVAAARKRGEKVVMTNGVFDILHAGHVSYLANARKLGDRLIVAVNSDASTKRLKGETRPVNPLEQRMIVLGALEAVDWVVSFEEDTPQRLIAGILPDLLVKGGDYKPEQIAGSEEVWANGGEVLVLNFEDGCSTTNIIKKIQKDSDK.

The tract at residues 1-318 (MKVTLPEFER…ENAVRGRAET (318 aa)) is ribokinase. An ATP-binding site is contributed by 195 to 198 (NLSE). Residue D264 is part of the active site. The tract at residues 344–477 (MTNGVFDILH…IKKIQKDSDK (134 aa)) is cytidylyltransferase.

This sequence in the N-terminal section; belongs to the carbohydrate kinase PfkB family. It in the C-terminal section; belongs to the cytidylyltransferase family. As to quaternary structure, homodimer.

It catalyses the reaction D-glycero-beta-D-manno-heptose 7-phosphate + ATP = D-glycero-beta-D-manno-heptose 1,7-bisphosphate + ADP + H(+). The enzyme catalyses D-glycero-beta-D-manno-heptose 1-phosphate + ATP + H(+) = ADP-D-glycero-beta-D-manno-heptose + diphosphate. It functions in the pathway nucleotide-sugar biosynthesis; ADP-L-glycero-beta-D-manno-heptose biosynthesis; ADP-L-glycero-beta-D-manno-heptose from D-glycero-beta-D-manno-heptose 7-phosphate: step 1/4. The protein operates within nucleotide-sugar biosynthesis; ADP-L-glycero-beta-D-manno-heptose biosynthesis; ADP-L-glycero-beta-D-manno-heptose from D-glycero-beta-D-manno-heptose 7-phosphate: step 3/4. Functionally, catalyzes the phosphorylation of D-glycero-D-manno-heptose 7-phosphate at the C-1 position to selectively form D-glycero-beta-D-manno-heptose-1,7-bisphosphate. Its function is as follows. Catalyzes the ADP transfer from ATP to D-glycero-beta-D-manno-heptose 1-phosphate, yielding ADP-D-glycero-beta-D-manno-heptose. This chain is Bifunctional protein HldE, found in Klebsiella pneumoniae subsp. pneumoniae (strain ATCC 700721 / MGH 78578).